The sequence spans 256 residues: Protein YIPF5 (256 aa).

At 1–125 (MSNFDNFNTD…ADGNIMNETD (125 aa)) the chain is on the cytoplasmic side. The helical transmembrane segment at 126–146 (LAGPMVFCLAFGATLLLAGKI) threads the bilayer. Residue Gln147 is a topological domain, lumenal. Residues 148–168 (FGYVYGISAIGCLGMYCLLNL) traverse the membrane as a helical segment. The Cytoplasmic portion of the chain corresponds to 169–172 (MSMT). A helical membrane pass occupies residues 173-193 (GVSFGCVSSVLGYCLLPMIIL). Residues 194–195 (SS) are Lumenal-facing. A helical membrane pass occupies residues 196 to 216 (FAVIFSLQGILGIVLAALIIG). At 217–235 (WCSFSASKIFISALAMDGQ) the chain is on the cytoplasmic side. A helical membrane pass occupies residues 236-256 (QVLVAYPCALLYGVFALISVF).

The protein belongs to the YIP1 family.

It is found in the endoplasmic reticulum membrane. The protein localises to the golgi apparatus. The protein resides in the cis-Golgi network membrane. In terms of biological role, plays a role in transport between endoplasmic reticulum and Golgi. This Xenopus tropicalis (Western clawed frog) protein is Protein YIPF5 (yipf5).